The chain runs to 417 residues: NADH-quinone oxidoreductase subunit D (417 aa).

The protein belongs to the complex I 49 kDa subunit family. As to quaternary structure, NDH-1 is composed of 14 different subunits. Subunits NuoB, C, D, E, F, and G constitute the peripheral sector of the complex.

It localises to the cell inner membrane. It carries out the reaction a quinone + NADH + 5 H(+)(in) = a quinol + NAD(+) + 4 H(+)(out). Functionally, NDH-1 shuttles electrons from NADH, via FMN and iron-sulfur (Fe-S) centers, to quinones in the respiratory chain. The immediate electron acceptor for the enzyme in this species is believed to be ubiquinone. Couples the redox reaction to proton translocation (for every two electrons transferred, four hydrogen ions are translocated across the cytoplasmic membrane), and thus conserves the redox energy in a proton gradient. This is NADH-quinone oxidoreductase subunit D from Burkholderia ambifaria (strain MC40-6).